A 184-amino-acid chain; its full sequence is Ras-related protein Rap-1b-like protein (184 aa).

Gly-10–Ala-18 contributes to the GTP binding site. Residues Tyr-32 to Tyr-40 carry the Effector region motif. GTP contacts are provided by residues Asp-57 to Thr-61, Asn-116 to Asp-119, and Ser-147 to Lys-149. Cys-181 is lipidated: S-geranylgeranyl cysteine. Positions Gln-182–Leu-184 are cleaved as a propeptide — removed in mature form.

Belongs to the small GTPase superfamily. Ras family.

It is found in the cell membrane. The protein resides in the cytoplasm. Its subcellular location is the cytosol. The enzyme catalyses GTP + H2O = GDP + phosphate + H(+). In terms of biological role, probable GTP-binding protein with intrinsic GTPase activity. This chain is Ras-related protein Rap-1b-like protein, found in Homo sapiens (Human).